The chain runs to 100 residues: Small ribosomal subunit protein uS14 (100 aa).

The protein belongs to the universal ribosomal protein uS14 family. Part of the 30S ribosomal subunit. Contacts proteins S3 and S10.

Functionally, binds 16S rRNA, required for the assembly of 30S particles and may also be responsible for determining the conformation of the 16S rRNA at the A site. The polypeptide is Small ribosomal subunit protein uS14 (Prochlorococcus marinus (strain MIT 9313)).